A 136-amino-acid polypeptide reads, in one-letter code: uncharacterized protein (136 aa).

The protein to E.coli YcgX and YdfO.

This is an uncharacterized protein from Escherichia coli (strain K12).